The chain runs to 447 residues: Elongation factor 1-alpha (447 aa).

Positions 5-230 constitute a tr-type G domain; the sequence is KVHINIVVIG…DNINEPKRPS (226 aa). The interval 14–21 is G1; it reads GHVDSGKS. 14–21 lines the GTP pocket; the sequence is GHVDSGKS. K55 bears the N6,N6-dimethyllysine mark. Residues 70-74 are G2; it reads GITID. K79 bears the N6,N6,N6-trimethyllysine mark. Residues 91–94 are G3; it reads DAPG. GTP contacts are provided by residues 91–95 and 153–156; these read DAPGH and NKMD. A G4 region spans residues 153-156; it reads NKMD. K187 carries the N6,N6,N6-trimethyllysine modification. Residues 194–196 are G5; sequence SGF. K261 carries the N6-methyllysine modification. E289 carries the post-translational modification 5-glutamyl glycerylphosphorylethanolamine. The residue at position 306 (K306) is an N6,N6,N6-trimethyllysine. Residue E362 is modified to 5-glutamyl glycerylphosphorylethanolamine. At K396 the chain carries N6,N6,N6-trimethyllysine.

The protein belongs to the TRAFAC class translation factor GTPase superfamily. Classic translation factor GTPase family. EF-Tu/EF-1A subfamily.

It is found in the cytoplasm. Its function is as follows. This protein promotes the GTP-dependent binding of aminoacyl-tRNA to the A-site of ribosomes during protein biosynthesis. The chain is Elongation factor 1-alpha from Pisum sativum (Garden pea).